Here is a 251-residue protein sequence, read N- to C-terminus: Gamma-glutamyl peptidase 5 (251 aa).

One can recognise a Glutamine amidotransferase type-1 domain in the interval 17 to 214 (STFVKKAYGG…IDRVVNLKLM (198 aa)). Residue Cys101 is the Nucleophile of the active site. Active-site residues include His193 and Glu195.

It belongs to the peptidase C26 family.

It localises to the cytoplasm. The protein resides in the cytosol. It participates in secondary metabolite biosynthesis. In terms of biological role, involved in glucosinolate biosynthesis. Hydrolyzes the gamma-glutamyl peptide bond of several glutathione (GSH) conjugates to produce Cys-Gly conjugates related to glucosinolates. The gamma-Glu-Cys-Gly-GSH conjugates are the sulfur-donating molecule in glucosinolate biosynthesis. The protein is Gamma-glutamyl peptidase 5 of Arabidopsis thaliana (Mouse-ear cress).